The sequence spans 179 residues: Large ribosomal subunit protein uL5 (179 aa).

This sequence belongs to the universal ribosomal protein uL5 family. Part of the 50S ribosomal subunit; part of the 5S rRNA/L5/L18/L25 subcomplex. Contacts the 5S rRNA and the P site tRNA. Forms a bridge to the 30S subunit in the 70S ribosome.

Its function is as follows. This is one of the proteins that bind and probably mediate the attachment of the 5S RNA into the large ribosomal subunit, where it forms part of the central protuberance. In the 70S ribosome it contacts protein S13 of the 30S subunit (bridge B1b), connecting the 2 subunits; this bridge is implicated in subunit movement. Contacts the P site tRNA; the 5S rRNA and some of its associated proteins might help stabilize positioning of ribosome-bound tRNAs. The sequence is that of Large ribosomal subunit protein uL5 from Desulfosudis oleivorans (strain DSM 6200 / JCM 39069 / Hxd3) (Desulfococcus oleovorans).